Reading from the N-terminus, the 255-residue chain is Ribonuclease HII (255 aa).

The RNase H type-2 domain occupies 70–255 (ELIAGVDEVG…FEPIKSIIKK (186 aa)). Residues aspartate 76, glutamate 77, and aspartate 168 each contribute to the a divalent metal cation site.

The protein belongs to the RNase HII family. It depends on Mn(2+) as a cofactor. Mg(2+) is required as a cofactor.

It localises to the cytoplasm. It catalyses the reaction Endonucleolytic cleavage to 5'-phosphomonoester.. Its function is as follows. Endonuclease that specifically degrades the RNA of RNA-DNA hybrids. The protein is Ribonuclease HII of Streptococcus thermophilus (strain ATCC BAA-491 / LMD-9).